The following is a 173-amino-acid chain: Urease accessory protein UreE (173 aa).

The tract at residues 136-173 (PEGGAYAGSGQDHHDHSHGEHTQGEHTHDEAAEPHHHG) is disordered. A compositionally biased stretch (basic and acidic residues) spans 146–173 (QDHHDHSHGEHTQGEHTHDEAAEPHHHG).

Belongs to the UreE family.

The protein localises to the cytoplasm. In terms of biological role, involved in urease metallocenter assembly. Binds nickel. Probably functions as a nickel donor during metallocenter assembly. The polypeptide is Urease accessory protein UreE (Beijerinckia indica subsp. indica (strain ATCC 9039 / DSM 1715 / NCIMB 8712)).